Here is a 390-residue protein sequence, read N- to C-terminus: 2-oxoisovalerate dehydrogenase subunit beta, mitochondrial (390 aa).

Residues 1–48 (MAAVAARAGGLLWLRAAGAERRRCGLRCAALVQGFLQPGGEDTAQKRR) constitute a mitochondrion transit peptide. Y150 is a thiamine diphosphate binding site. Residues G176, L178, T179, C226, and D229 each coordinate K(+). N6-acetyllysine is present on K230. N231 lines the K(+) pocket. N6-acetyllysine is present on K239.

As to quaternary structure, heterotetramer of 2 alpha/BCKDHA and 2 beta chains/BCKDHB that forms the branched-chain alpha-keto acid decarboxylase (E1) component of the BCKD complex. The branched-chain alpha-ketoacid dehydrogenase is a large complex composed of three major building blocks E1, E2 and E3. It is organized around E2, a 24-meric cubic core composed of DBT, to which are associated 6 to 12 copies of E1, and approximately 6 copies of the dehydrogenase E3, a DLD dimer. Thiamine diphosphate serves as cofactor.

Its subcellular location is the mitochondrion matrix. The enzyme catalyses N(6)-[(R)-lipoyl]-L-lysyl-[protein] + 3-methyl-2-oxobutanoate + H(+) = N(6)-[(R)-S(8)-2-methylpropanoyldihydrolipoyl]-L-lysyl-[protein] + CO2. Functionally, together with BCKDHA forms the heterotetrameric E1 subunit of the mitochondrial branched-chain alpha-ketoacid dehydrogenase (BCKD) complex. The BCKD complex catalyzes the multi-step oxidative decarboxylation of alpha-ketoacids derived from the branched-chain amino-acids valine, leucine and isoleucine producing CO2 and acyl-CoA which is subsequently utilized to produce energy. The E1 subunit catalyzes the first step with the decarboxylation of the alpha-ketoacid forming an enzyme-product intermediate. A reductive acylation mediated by the lipoylamide cofactor of E2 extracts the acyl group from the E1 active site for the next step of the reaction. The protein is 2-oxoisovalerate dehydrogenase subunit beta, mitochondrial of Mus musculus (Mouse).